The primary structure comprises 137 residues: Peptide methionine sulfoxide reductase MsrB (137 aa).

The 123-residue stretch at 7–129 (AEELKKKLSE…NSASLAFSDE (123 aa)) folds into the MsrB domain. 4 residues coordinate Zn(2+): cysteine 46, cysteine 49, cysteine 95, and cysteine 98. Residue cysteine 118 is the Nucleophile of the active site.

It belongs to the MsrB Met sulfoxide reductase family. The cofactor is Zn(2+).

The catalysed reaction is L-methionyl-[protein] + [thioredoxin]-disulfide + H2O = L-methionyl-(R)-S-oxide-[protein] + [thioredoxin]-dithiol. The protein is Peptide methionine sulfoxide reductase MsrB of Salmonella agona (strain SL483).